Reading from the N-terminus, the 640-residue chain is Probable Ufm1-specific protease (640 aa).

Residues cysteine 467, aspartate 591, and histidine 593 contribute to the active site.

It belongs to the peptidase C78 family.

Functionally, thiol protease which recognizes and hydrolyzes the peptide bond at the C-terminal Gly of ufm-1, a ubiquitin-like modifier protein bound to a number of target proteins. In Oryza sativa subsp. japonica (Rice), this protein is Probable Ufm1-specific protease.